We begin with the raw amino-acid sequence, 492 residues long: UPF0652 protein C22H10.08 (492 aa).

This sequence belongs to the UPF0652 family.

The protein localises to the cytoplasm. The protein resides in the nucleus. The polypeptide is UPF0652 protein C22H10.08 (Schizosaccharomyces pombe (strain 972 / ATCC 24843) (Fission yeast)).